The following is a 537-amino-acid chain: Chaperonin GroEL (537 aa).

ATP-binding positions include 29-32 (TLGP), 86-90 (DGTTT), Gly413, and Asp492.

The protein belongs to the chaperonin (HSP60) family. Forms a cylinder of 14 subunits composed of two heptameric rings stacked back-to-back. Interacts with the co-chaperonin GroES.

It is found in the cytoplasm. It carries out the reaction ATP + H2O + a folded polypeptide = ADP + phosphate + an unfolded polypeptide.. Its function is as follows. Together with its co-chaperonin GroES, plays an essential role in assisting protein folding. The GroEL-GroES system forms a nano-cage that allows encapsulation of the non-native substrate proteins and provides a physical environment optimized to promote and accelerate protein folding. This chain is Chaperonin GroEL, found in Dehalococcoides mccartyi (strain CBDB1).